The primary structure comprises 186 residues: Allergen Fel d 4 (186 aa).

The N-terminal stretch at 1-15 (MKLLLLCLGLILVCA) is a signal peptide. 2 N-linked (GlcNAc...) asparagine glycosylation sites follow: Asn51 and Asn66. Residues Cys81 and Cys171 are joined by a disulfide bond.

It belongs to the calycin superfamily. Lipocalin family. Abundant in urine (at protein level).

The protein localises to the secreted. May be a pheromone carrier. Acts as a kairomone, detected by the prey vomeronasal organ and inducing fear reactions in mice. This is Allergen Fel d 4 from Felis catus (Cat).